The following is a 404-amino-acid chain: NADH-quinone oxidoreductase subunit D 1 (404 aa).

This sequence belongs to the complex I 49 kDa subunit family. NDH-1 is composed of 14 different subunits. Subunits NuoB, C, D, E, F, and G constitute the peripheral sector of the complex.

It localises to the cell inner membrane. It carries out the reaction a quinone + NADH + 5 H(+)(in) = a quinol + NAD(+) + 4 H(+)(out). Its function is as follows. NDH-1 shuttles electrons from NADH, via FMN and iron-sulfur (Fe-S) centers, to quinones in the respiratory chain. The immediate electron acceptor for the enzyme in this species is believed to be ubiquinone. Couples the redox reaction to proton translocation (for every two electrons transferred, four hydrogen ions are translocated across the cytoplasmic membrane), and thus conserves the redox energy in a proton gradient. The sequence is that of NADH-quinone oxidoreductase subunit D 1 from Sorangium cellulosum (strain So ce56) (Polyangium cellulosum (strain So ce56)).